The chain runs to 385 residues: Protein GOLM2 (385 aa).

Topologically, residues 1–12 (MVGFGAPRRTGR) are cytoplasmic. The chain crosses the membrane as a helical; Signal-anchor for type II membrane protein span at residues 13-33 (LPPFVLVALLAVIGLLAFNYW). Over 34–385 (SVSARQAALH…YHKDHLNETL (352 aa)) the chain is Lumenal. The stretch at 44–193 (DELLGLQAQV…KEELDKQPQK (150 aa)) forms a coiled coil. The disordered stretch occupies residues 169-385 (LAERKREYEE…YHKDHLNETL (217 aa)). 2 stretches are compositionally biased toward basic and acidic residues: residues 170–193 (AERK…QPQK) and 211–220 (EVKEKIEDPS). The segment covering 265–283 (LPSQSKSLLEKQPSLQPLS) has biased composition (polar residues). A compositionally biased stretch (basic and acidic residues) spans 285–299 (TEHEVKKPLPDKKET). The span at 356-367 (NGDDGNVEDDDH) shows a compositional bias: acidic residues. The span at 368–385 (DGQADAGEYHKDHLNETL) shows a compositional bias: basic and acidic residues.

It belongs to the GOLM family.

The protein resides in the membrane. The polypeptide is Protein GOLM2 (golm2) (Xenopus laevis (African clawed frog)).